The chain runs to 1124 residues: DNA-directed RNA polymerase subunit Rpo2 (1124 aa).

Zn(2+) contacts are provided by C1061, C1064, C1079, and H1082.

Belongs to the RNA polymerase beta chain family. In terms of assembly, part of the 13-subunit RNA polymerase complex. Requires Zn(2+) as cofactor.

The protein localises to the cytoplasm. It catalyses the reaction RNA(n) + a ribonucleoside 5'-triphosphate = RNA(n+1) + diphosphate. Functionally, DNA-dependent RNA polymerase (RNAP) catalyzes the transcription of DNA into RNA using the four ribonucleoside triphosphates as substrates. This subunit is involved in DNA promoter recognition. The protein is DNA-directed RNA polymerase subunit Rpo2 of Saccharolobus solfataricus (strain ATCC 35092 / DSM 1617 / JCM 11322 / P2) (Sulfolobus solfataricus).